The primary structure comprises 132 residues: Small ribosomal subunit protein uS9 (132 aa).

Belongs to the universal ribosomal protein uS9 family.

The protein is Small ribosomal subunit protein uS9 of Leptospira borgpetersenii serovar Hardjo-bovis (strain JB197).